Here is a 496-residue protein sequence, read N- to C-terminus: UDP-N-acetylmuramoylalanine--D-glutamate ligase (496 aa).

Residue 130 to 136 (GTNGKTT) coordinates ATP.

The protein belongs to the MurCDEF family.

The protein resides in the cytoplasm. The enzyme catalyses UDP-N-acetyl-alpha-D-muramoyl-L-alanine + D-glutamate + ATP = UDP-N-acetyl-alpha-D-muramoyl-L-alanyl-D-glutamate + ADP + phosphate + H(+). It functions in the pathway cell wall biogenesis; peptidoglycan biosynthesis. Functionally, cell wall formation. Catalyzes the addition of glutamate to the nucleotide precursor UDP-N-acetylmuramoyl-L-alanine (UMA). In Mycobacterium bovis (strain ATCC BAA-935 / AF2122/97), this protein is UDP-N-acetylmuramoylalanine--D-glutamate ligase.